A 488-amino-acid polypeptide reads, in one-letter code: 3-octaprenyl-4-hydroxybenzoate carboxy-lyase (488 aa).

Position 172 (Asn172) interacts with Mn(2+). Residues 175-177 (IYR), 189-191 (RWL), and 194-195 (RG) contribute to the prenylated FMN site. Mn(2+) is bound at residue Glu238. The Proton donor role is filled by Asp287.

It belongs to the UbiD family. As to quaternary structure, homohexamer. Prenylated FMN serves as cofactor. Mn(2+) is required as a cofactor.

It localises to the cell membrane. It catalyses the reaction a 4-hydroxy-3-(all-trans-polyprenyl)benzoate + H(+) = a 2-(all-trans-polyprenyl)phenol + CO2. The protein operates within cofactor biosynthesis; ubiquinone biosynthesis. In terms of biological role, catalyzes the decarboxylation of 3-octaprenyl-4-hydroxy benzoate to 2-octaprenylphenol, an intermediate step in ubiquinone biosynthesis. This chain is 3-octaprenyl-4-hydroxybenzoate carboxy-lyase, found in Ectopseudomonas mendocina (strain ymp) (Pseudomonas mendocina).